Reading from the N-terminus, the 236-residue chain is Peptidase E (236 aa).

Active-site charge relay system residues include Ser-122, Asp-137, and His-159.

The protein belongs to the peptidase S51 family.

It is found in the cytoplasm. It carries out the reaction Dipeptidase E catalyzes the hydrolysis of dipeptides Asp-|-Xaa. It does not act on peptides with N-terminal Glu, Asn or Gln, nor does it cleave isoaspartyl peptides.. Hydrolyzes dipeptides containing N-terminal aspartate residues. May play a role in allowing the cell to use peptide aspartate to spare carbon otherwise required for the synthesis of the aspartate family of amino acids. The chain is Peptidase E from Shewanella oneidensis (strain ATCC 700550 / JCM 31522 / CIP 106686 / LMG 19005 / NCIMB 14063 / MR-1).